The primary structure comprises 264 residues: Endochitinase At2g43590 (264 aa).

An N-terminal signal peptide occupies residues 1-24; sequence MAFTKISLVLLLCLLGFFSETVKS. One can recognise a Chitin-binding type-1 domain in the interval 25–59; the sequence is QNCGCAPNLCCSQFGYCGTDDAYCGVGCRSGPCRG. Cystine bridges form between Cys27-Cys35, Cys29-Cys41, Cys34-Cys48, and Cys52-Cys57. A catalytic region spans residues 66 to 264; it reads GSVGSIVTQG…GVDPGPNLSC (199 aa). Catalysis depends on Glu128, which acts as the Proton donor. Asn261 is a glycosylation site (N-linked (GlcNAc...) asparagine).

The protein belongs to the glycosyl hydrolase 19 family. Chitinase class I subfamily.

It carries out the reaction Random endo-hydrolysis of N-acetyl-beta-D-glucosaminide (1-&gt;4)-beta-linkages in chitin and chitodextrins.. The protein is Endochitinase At2g43590 of Arabidopsis thaliana (Mouse-ear cress).